The chain runs to 384 residues: Sphingosine N-acyltransferase lac1 (384 aa).

Over 1-58 the chain is Cytoplasmic; sequence MGNNTSRRSQSQKFKNIPSISAGSFSTMPVQHRGRRRRSKSIVGRAAQNAVLRSKEKT. Polar residues predominate over residues 19 to 29; sequence SISAGSFSTMP. Residues 19 to 42 are disordered; that stretch reads SISAGSFSTMPVQHRGRRRRSKSI. A Phosphoserine modification is found at Ser-41. Residues 59–79 traverse the membrane as a helical segment; the sequence is WIVPLILLTLLVGWYFVNPNG. Residues 80-103 are Lumenal-facing; it reads YIKYGIFLSYPIPGTNPAQYGKGR. A helical membrane pass occupies residues 104–124; the sequence is LDIAFCLFYALFFTFCREFIM. The Cytoplasmic segment spans residues 125 to 154; sequence QEIIARIGRHFNIRAPAKLRRFEEQAYTCL. The 217-residue stretch at 141–357 folds into the TLC domain; the sequence is AKLRRFEEQA…ILRIGYRAFT (217 aa). A helical transmembrane segment spans residues 155–175; the sequence is YFTVMGSWGLYVMKQTPMWFF. Topologically, residues 176-194 are lumenal; that stretch reads NTDAFWEEYPHFYHVGSFK. The chain crosses the membrane as a helical span at residues 195 to 215; sequence AFYLIEAAYWIQQALVLILQL. Residues 216-232 lie on the Cytoplasmic side of the membrane; sequence EKPRKDFKELVVHHIIT. The chain crosses the membrane as a helical span at residues 233–253; the sequence is LLLIGLSYYFHFTWIGLAVFI. Residues 254–269 are Lumenal-facing; the sequence is TMDTSDIWLALSKCLN. A helical membrane pass occupies residues 270–290; that stretch reads YVNTVIVYPIFVIFVFVWIYM. Topologically, residues 291 to 328 are cytoplasmic; it reads RHYLNFKIMWAVWGTMRTINSFDLDWAAEQYKCWISRD. A helical transmembrane segment spans residues 329-349; it reads VTLILLTALQLVNIYWLILIL. The Lumenal segment spans residues 350–384; it reads RIGYRAFTTNDTHDERSEDEDEEVSDEKSSAKKND. Asn-359 carries an N-linked (GlcNAc...) asparagine glycan. Thr-361 is modified (phosphothreonine). Residues 362–384 form a disordered region; the sequence is HDERSEDEDEEVSDEKSSAKKND. At Ser-366 the chain carries Phosphoserine. The span at 375-384 shows a compositional bias: basic and acidic residues; it reads DEKSSAKKND.

The protein belongs to the sphingosine N-acyltransferase family.

It is found in the endoplasmic reticulum membrane. The enzyme catalyses a fatty acyl-CoA + sphing-4-enine = an N-acylsphing-4-enine + CoA + H(+). Functionally, component of the ceramide synthase complex required for C26-CoA-dependent ceramide synthesis. Facilitates ER-to-Golgi transport of GPI-anchored proteins. Has a role in meiosis. This Schizosaccharomyces pombe (strain 972 / ATCC 24843) (Fission yeast) protein is Sphingosine N-acyltransferase lac1 (lac1).